Reading from the N-terminus, the 262-residue chain is Ribosomal RNA small subunit methyltransferase A (262 aa).

S-adenosyl-L-methionine contacts are provided by Asn13, Leu15, Gly40, Glu61, Asp85, and Asn105.

Belongs to the class I-like SAM-binding methyltransferase superfamily. rRNA adenine N(6)-methyltransferase family. RsmA subfamily.

The protein localises to the cytoplasm. It carries out the reaction adenosine(1518)/adenosine(1519) in 16S rRNA + 4 S-adenosyl-L-methionine = N(6)-dimethyladenosine(1518)/N(6)-dimethyladenosine(1519) in 16S rRNA + 4 S-adenosyl-L-homocysteine + 4 H(+). Specifically dimethylates two adjacent adenosines (A1518 and A1519) in the loop of a conserved hairpin near the 3'-end of 16S rRNA in the 30S particle. May play a critical role in biogenesis of 30S subunits. This is Ribosomal RNA small subunit methyltransferase A from Laribacter hongkongensis (strain HLHK9).